We begin with the raw amino-acid sequence, 351 residues long: Phosphoribosylformylglycinamidine cyclo-ligase (351 aa).

It belongs to the AIR synthase family.

The protein localises to the cytoplasm. It carries out the reaction 2-formamido-N(1)-(5-O-phospho-beta-D-ribosyl)acetamidine + ATP = 5-amino-1-(5-phospho-beta-D-ribosyl)imidazole + ADP + phosphate + H(+). It functions in the pathway purine metabolism; IMP biosynthesis via de novo pathway; 5-amino-1-(5-phospho-D-ribosyl)imidazole from N(2)-formyl-N(1)-(5-phospho-D-ribosyl)glycinamide: step 2/2. This chain is Phosphoribosylformylglycinamidine cyclo-ligase, found in Lysinibacillus sphaericus (strain C3-41).